Reading from the N-terminus, the 371-residue chain is Glycosyltransferase 8 domain-containing protein 1 (371 aa).

The Cytoplasmic portion of the chain corresponds to Met1–Asn7. The helical; Signal-anchor for type II membrane protein transmembrane segment at Ile8 to Ser28 threads the bilayer. Residues Leu29–Lys371 lie on the Lumenal side of the membrane. Asn257 carries an N-linked (GlcNAc...) asparagine glycan.

Belongs to the glycosyltransferase 8 family.

It is found in the membrane. The chain is Glycosyltransferase 8 domain-containing protein 1 (Glt8d1) from Mus musculus (Mouse).